The primary structure comprises 296 residues: NVPENSRGPFPQQLVRIRSDKDNDIPIRYSITGVGADQPPMEVFNIDSMSGRMYVTRPMDREERASYHLRAHAVDMNGNKVENPIDLYIYVIDMNDNRPEFINQVYNGSVDEGSKPGTYVMTVTANDADDSTTANGMVRYRIVTQTPQSPSQNMFTINSETGDIVTVAAGLDREKVQQYTVIVQATDMEGNLNYGLSNTATAIITVTDVNDNPPEFTTSTFAGEVPENRIETVVANLTVMDRDQPHSPNWNAVYRIISGDPSGHFSVRTDPVTNEGMVTVVKAVDYELNRAFMLTI.

Cadherin domains lie at Asn1 to Phe101, Ile102 to Phe216, and Thr217 to Ile296. Residues Asn1–Ile296 are Extracellular-facing. Residues Asn107 and Asn236 are each glycosylated (N-linked (GlcNAc...) asparagine).

Its subcellular location is the cell membrane. Functionally, cadherins are calcium-dependent cell adhesion proteins. They preferentially interact with themselves in a homophilic manner in connecting cells; cadherins may thus contribute to the sorting of heterogeneous cell types. May play an important role in retinal development. This is Cadherin-4 (Cdh4) from Rattus norvegicus (Rat).